A 352-amino-acid polypeptide reads, in one-letter code: Phosphoribosylformylglycinamidine cyclo-ligase (352 aa).

This sequence belongs to the AIR synthase family.

It is found in the cytoplasm. The enzyme catalyses 2-formamido-N(1)-(5-O-phospho-beta-D-ribosyl)acetamidine + ATP = 5-amino-1-(5-phospho-beta-D-ribosyl)imidazole + ADP + phosphate + H(+). The protein operates within purine metabolism; IMP biosynthesis via de novo pathway; 5-amino-1-(5-phospho-D-ribosyl)imidazole from N(2)-formyl-N(1)-(5-phospho-D-ribosyl)glycinamide: step 2/2. The polypeptide is Phosphoribosylformylglycinamidine cyclo-ligase (Pseudomonas entomophila (strain L48)).